We begin with the raw amino-acid sequence, 355 residues long: UDP-N-acetylglucosamine--N-acetylmuramyl-(pentapeptide) pyrophosphoryl-undecaprenol N-acetylglucosamine transferase (355 aa).

Residues 15-17 (TGG), N127, R163, S191, I244, 263-268 (ALTVSE), and Q288 contribute to the UDP-N-acetyl-alpha-D-glucosamine site.

This sequence belongs to the glycosyltransferase 28 family. MurG subfamily.

The protein resides in the cell inner membrane. The enzyme catalyses di-trans,octa-cis-undecaprenyl diphospho-N-acetyl-alpha-D-muramoyl-L-alanyl-D-glutamyl-meso-2,6-diaminopimeloyl-D-alanyl-D-alanine + UDP-N-acetyl-alpha-D-glucosamine = di-trans,octa-cis-undecaprenyl diphospho-[N-acetyl-alpha-D-glucosaminyl-(1-&gt;4)]-N-acetyl-alpha-D-muramoyl-L-alanyl-D-glutamyl-meso-2,6-diaminopimeloyl-D-alanyl-D-alanine + UDP + H(+). It functions in the pathway cell wall biogenesis; peptidoglycan biosynthesis. Its function is as follows. Cell wall formation. Catalyzes the transfer of a GlcNAc subunit on undecaprenyl-pyrophosphoryl-MurNAc-pentapeptide (lipid intermediate I) to form undecaprenyl-pyrophosphoryl-MurNAc-(pentapeptide)GlcNAc (lipid intermediate II). This is UDP-N-acetylglucosamine--N-acetylmuramyl-(pentapeptide) pyrophosphoryl-undecaprenol N-acetylglucosamine transferase from Cronobacter sakazakii (strain ATCC BAA-894) (Enterobacter sakazakii).